The following is a 1031-amino-acid chain: GTPase-activating protein DDB_G0291510 (1031 aa).

The segment at 18-48 (VEKGDIDENNSGSINNRPLSPTLFSSNSSNN) is disordered. A compositionally biased stretch (polar residues) spans 26-41 (NNSGSINNRPLSPTLF). One can recognise a Rap-GAP domain in the interval 186–404 (FKDLEQTQTE…RTFKDQLESI (219 aa)). The CNH domain maps to 471–881 (NEKINCLDVV…LSNDDCNLDN (411 aa)). Residues 920–950 (NNNYNNNGNNSNGGNNNNNNNNNNGCNNSLI) form a disordered region.

This chain is GTPase-activating protein DDB_G0291510, found in Dictyostelium discoideum (Social amoeba).